Reading from the N-terminus, the 70-residue chain is Toxin Boma6d (70 aa).

Residues 2 to 68 (RDAYIAQNYN…VPIKVEGKCH (67 aa)) enclose the LCN-type CS-alpha/beta domain. Disulfide bonds link Cys12-Cys67, Cys16-Cys40, Cys22-Cys50, and Cys26-Cys52.

Belongs to the long (4 C-C) scorpion toxin superfamily. Sodium channel inhibitor family. Alpha subfamily. Expressed by the venom gland.

It localises to the secreted. In terms of biological role, alpha toxins bind voltage-independently at site-3 of sodium channels (Nav) and inhibit the inactivation of the activated channels, thereby blocking neuronal transmission. In Buthus occitanus mardochei (Moroccan scorpion), this protein is Toxin Boma6d.